The sequence spans 780 residues: MTHEEHHAAKTLGIGKAIAVLTSGGDAQGMNAAVRAVVRVGIFTGARVFFVHEGYQGLVDGGEHIREATWESVSMMLQLGGTVIGSARCKDFREREGRLRAAHNLVKRGITNLCVIGGDGSLTGADTFRSEWSDLLNDLQKDGKITAEEATKSSYLNIVGLVGSIDNDFCGTDMTIGTDSALHRIVEIVDAITTTAQSHQRTFVLEVMGRHCGYLALVTSLSCGADWVFIPECPPDDDWEEHLCRRLSETRTRGSRLNIIIVAEGAIDKNGKPITSEDIKNLVVKRLGYDTRVTVLGHVQRGGTPSAFDRILGSRMGVEAVMALLEGTPDTPACVVSLSGNQAVRLPLMECVQVTKDVTKAMDEKRFDEAIKLRGRSFMNNWEVYKLLAHVRPPVSKGGLHTVAVMNVGAPAAGMNAAVRSTVRIGLIQGNRVLVVHDGFEGLAKGQIEEAGWSYVGGWTGQGGSKLGTKRTLPKKNLEQISANITKFNIQGLVIIGGFEAYTGGLELMEGRKQFDELCIPFVVIPATVSNNVPGSDFSIGADTALNTICTTCDRIKQSAAGTKRRVFIIETMGGYCGYLATMAGLAAGADAAYIFEEPFTIRDLQVNVEHLVQKMKTTVKRGLVLRNEKCNENYTTDFIFNLYSEEGKGIFDSRKNVLGHMQQGGSPTPFDRNFATKMGAKAMNWMSGKIKESYRNGRIFANTPDSGCVLGMRKRALVFQPVTELKDQTDFEHRIPKEQWWLKLRPILKILAKYEIDLDTSDHAHLEHISRKRSGEAAV.

Position 2 is an N-acetylthreonine (Thr-2). Residues 2 to 390 (THEEHHAAKT…NWEVYKLLAH (389 aa)) form an N-terminal catalytic PFK domain 1 region. ATP is bound by residues Gly-25, 88-89 (RC), and 118-121 (GDGS). Asp-119 provides a ligand contact to Mg(2+). Ser-133 carries the phosphoserine modification. Substrate is bound by residues 164–166 (SID), Arg-201, 208–210 (MGR), Glu-264, Arg-292, and 298–301 (HVQR). Asp-166 acts as the Proton acceptor in catalysis. Residue Ser-377 is modified to Phosphoserine. An interdomain linker region spans residues 391-401 (VRPPVSKGGLH). Residues 402 to 780 (TVAVMNVGAP…SRKRSGEAAV (379 aa)) form a C-terminal regulatory PFK domain 2 region. Beta-D-fructose 2,6-bisphosphate-binding positions include Arg-471 and 528 to 532 (TVSNN). Ser-530 is a glycosylation site (O-linked (GlcNAc) serine). Lys-557 is modified (N6-(2-hydroxyisobutyryl)lysine). Beta-D-fructose 2,6-bisphosphate contacts are provided by residues Arg-566, 573-575 (MGG), Glu-629, Arg-655, and 661-664 (HMQQ). Ser-667 bears the Phosphoserine mark. Beta-D-fructose 2,6-bisphosphate is bound at residue Arg-735. Ser-775 carries the phosphoserine modification.

This sequence belongs to the phosphofructokinase type A (PFKA) family. ATP-dependent PFK group I subfamily. Eukaryotic two domain clade 'E' sub-subfamily. Homo- and heterotetramers. Phosphofructokinase (PFK) enzyme functions as a tetramer composed of different combinations of 3 types of subunits, called PFKM (M), PFKL (L) and PFKP (P). The composition of the PFK tetramer differs according to the tissue type it is present in. The kinetic and regulatory properties of the tetrameric enzyme are dependent on the subunit composition, hence can vary across tissues. Isoform 2 and isoform 3 interact (via N-terminal testis-specific region) with GSTM5. Isoform 2 and isoform 3 interact (via C-terminus) with HK1 (via N-terminal spermatogenic cell-specific region). Mg(2+) serves as cofactor. In terms of processing, glcNAcylation decreases enzyme activity. As to expression, isoform 1 is expressed in skeletal muscle (at protein level). Isoform 2 and isoform 3 are testis-specific and are detected in quiescent sperm (at protein level). They are first detected in the cytoplasm of round spermatids and subsequently in the flagellum of elongated spermatids extending into the seminiferous tubule lumen (at protein level). Isoform 2 is expressed at higher level than isoform 3 in testis.

The protein localises to the cytoplasm. The protein resides in the cell projection. Its subcellular location is the cilium. It is found in the flagellum. It catalyses the reaction beta-D-fructose 6-phosphate + ATP = beta-D-fructose 1,6-bisphosphate + ADP + H(+). Its pathway is carbohydrate degradation; glycolysis; D-glyceraldehyde 3-phosphate and glycerone phosphate from D-glucose: step 3/4. Allosterically activated by ADP, AMP, or fructose 2,6-bisphosphate, and allosterically inhibited by ATP or citrate. Catalyzes the phosphorylation of D-fructose 6-phosphate to fructose 1,6-bisphosphate by ATP, the first committing step of glycolysis. This chain is ATP-dependent 6-phosphofructokinase, muscle type (Pfkm), found in Mus musculus (Mouse).